A 68-amino-acid chain; its full sequence is UPF0253 protein ASA_2184 (68 aa).

It belongs to the UPF0253 family.

The sequence is that of UPF0253 protein ASA_2184 from Aeromonas salmonicida (strain A449).